The following is a 285-amino-acid chain: Hydroxyethylthiazole kinase 1 (285 aa).

Methionine 48 contacts substrate. 2 residues coordinate ATP: arginine 124 and serine 183. Substrate is bound at residue glycine 210.

This sequence belongs to the Thz kinase family. Mg(2+) is required as a cofactor.

The enzyme catalyses 5-(2-hydroxyethyl)-4-methylthiazole + ATP = 4-methyl-5-(2-phosphooxyethyl)-thiazole + ADP + H(+). It participates in cofactor biosynthesis; thiamine diphosphate biosynthesis; 4-methyl-5-(2-phosphoethyl)-thiazole from 5-(2-hydroxyethyl)-4-methylthiazole: step 1/1. In terms of biological role, catalyzes the phosphorylation of the hydroxyl group of 4-methyl-5-beta-hydroxyethylthiazole (THZ). The sequence is that of Hydroxyethylthiazole kinase 1 from Methanosphaera stadtmanae (strain ATCC 43021 / DSM 3091 / JCM 11832 / MCB-3).